The chain runs to 254 residues: Glutathione S-transferase U12 (254 aa).

The Nuclear localization signal signature appears at 19–23 (KKRKK). In terms of domain architecture, GST N-terminal spans 33-114 (TTVKLIGTWA…YVDESWPSDL (82 aa)). Glutathione is bound by residues 43 to 44 (SP), 71 to 72 (GK), 85 to 86 (KV), and 98 to 99 (ES). Residues 120–252 (LPSERAFARF…EFIEFAKKKF (133 aa)) enclose the GST C-terminal domain.

This sequence belongs to the GST superfamily. Tau family.

Its subcellular location is the nucleus. The enzyme catalyses RX + glutathione = an S-substituted glutathione + a halide anion + H(+). Its function is as follows. May be involved in the conjugation of reduced glutathione to a wide number of exogenous and endogenous hydrophobic electrophiles and have a detoxification role against certain herbicides. This chain is Glutathione S-transferase U12 (GSTU12), found in Arabidopsis thaliana (Mouse-ear cress).